A 259-amino-acid chain; its full sequence is Leucyl/phenylalanyl-tRNA--protein transferase (259 aa).

The protein belongs to the L/F-transferase family.

It is found in the cytoplasm. The enzyme catalyses N-terminal L-lysyl-[protein] + L-leucyl-tRNA(Leu) = N-terminal L-leucyl-L-lysyl-[protein] + tRNA(Leu) + H(+). It catalyses the reaction N-terminal L-arginyl-[protein] + L-leucyl-tRNA(Leu) = N-terminal L-leucyl-L-arginyl-[protein] + tRNA(Leu) + H(+). The catalysed reaction is L-phenylalanyl-tRNA(Phe) + an N-terminal L-alpha-aminoacyl-[protein] = an N-terminal L-phenylalanyl-L-alpha-aminoacyl-[protein] + tRNA(Phe). In terms of biological role, functions in the N-end rule pathway of protein degradation where it conjugates Leu, Phe and, less efficiently, Met from aminoacyl-tRNAs to the N-termini of proteins containing an N-terminal arginine or lysine. The sequence is that of Leucyl/phenylalanyl-tRNA--protein transferase from Teredinibacter turnerae (strain ATCC 39867 / T7901).